A 301-amino-acid polypeptide reads, in one-letter code: MLTHHLSKLATPKFLVPFAGATALSIGLALQYSTSNNYIANETGKTFTDSNEWVDLKLSKSIDLTHNTKHLVFKLKDENDVSGLITASCLLTKFVTPKGNNVIRPYTPVSDVNQSGEIDFVIKKYDGGKMSSHIFDLKEGETLSFKGPIVKWKWEPNQFKSIALIGGGTGITPLYQLLHQITSNPKDNTKVNLIYGNLTPEDILLKKEIDAIASKHKDQVKVHYFVDKADEKKWEGQIGFITKEFLQKELEKPGSDFKVFVCGPPGLYKAISGPKVSPTDQGELTGALKDLGFEKEHVFKF.

Residues 14-30 (FLVPFAGATALSIGLAL) form a helical membrane-spanning segment. Positions 51-155 (NEWVDLKLSK…KGPIVKWKWE (105 aa)) constitute an FAD-binding FR-type domain. An FAD-binding site is contributed by 158 to 193 (QFKSIALIGGGTGITPLYQLLHQITSNPKDNTKVNL).

Belongs to the flavoprotein pyridine nucleotide cytochrome reductase family. FAD serves as cofactor.

It localises to the mitochondrion outer membrane. The catalysed reaction is 2 Fe(III)-[cytochrome b5] + NADH = 2 Fe(II)-[cytochrome b5] + NAD(+) + H(+). In terms of biological role, may mediate the reduction of outer membrane cytochrome b5. The sequence is that of NADH-cytochrome b5 reductase 2 (MCR1) from Candida albicans (strain SC5314 / ATCC MYA-2876) (Yeast).